Here is a 591-residue protein sequence, read N- to C-terminus: NADH-quinone oxidoreductase subunit C/D (591 aa).

Residues 1–182 (MVTVVENTDP…TPYFLNTAKQ (182 aa)) are NADH dehydrogenase I subunit C. Positions 206 to 591 (DFMFLNIGPN…IDIVMADCDR (386 aa)) are NADH dehydrogenase I subunit D.

It in the N-terminal section; belongs to the complex I 30 kDa subunit family. This sequence in the C-terminal section; belongs to the complex I 49 kDa subunit family. As to quaternary structure, NDH-1 is composed of 13 different subunits. Subunits NuoB, CD, E, F, and G constitute the peripheral sector of the complex.

Its subcellular location is the cell inner membrane. The enzyme catalyses a quinone + NADH + 5 H(+)(in) = a quinol + NAD(+) + 4 H(+)(out). In terms of biological role, NDH-1 shuttles electrons from NADH, via FMN and iron-sulfur (Fe-S) centers, to quinones in the respiratory chain. The immediate electron acceptor for the enzyme in this species is believed to be ubiquinone. Couples the redox reaction to proton translocation (for every two electrons transferred, four hydrogen ions are translocated across the cytoplasmic membrane), and thus conserves the redox energy in a proton gradient. The sequence is that of NADH-quinone oxidoreductase subunit C/D from Psychrobacter cryohalolentis (strain ATCC BAA-1226 / DSM 17306 / VKM B-2378 / K5).